Here is a 578-residue protein sequence, read N- to C-terminus: MELNAGGVIAYISSSSSASSPASCHSEGSENSFQSSSSSVPSSPNSSNCDANGNPKNTDVSSIDGVLKSDRTDCPVKTGKPGAPGMTKSHSGMTKFSGMVLLCKVCGDVASGFHYGVHACEGCKGFFRRSIQQNIQYKKCLKNENCSIMRMNRNRCQQCRFKKCLSVGMSRDAVRFGRIPKREKQRMLIEMQSAMKTMMSTQFGGHLQSDTLAEPHEQSVPPAQEQLRPKPQLEQENIKSTPPPSDFAKEEVIGMVTRAHKDTFLYNQEHRENSSESMPPHRGERIPRNVEQYNLNHDHRGGGLHSHFPCSESQQHLSGQYKGRNMMHYPNGHTVCISNGHCVNFSSAYPQRVCDRIPVGGCSQTESRNSYLCSTGGRMHLVCPMSKSPYVDPQKSGHEIWEEFSMSFTPAVKEVVEFAKRIPGFRDLSQHDQVNLLKAGTFEVLMVRFASLFDAKERTVTFLSGKKYSVDDLHSMGAGDLLSSMFEFSEKLNGLQLSDEEMSLFTAVVLVSADRSGIENVNSVEALQETLIRALRTLIMKNHPNEASIFTKLLLKLPDLRSLNNMHSEELLAFKVHP.

Positions 1 to 60 are required for phosphorylation by CSNK1E and cytoplasmic localization; the sequence is MELNAGGVIAYISSSSSASSPASCHSEGSENSFQSSSSSVPSSPNSSNCDANGNPKNTDV. The segment at 1-99 is modulating; sequence MELNAGGVIA…HSGMTKFSGM (99 aa). Positions 13–47 are enriched in low complexity; sequence SSSSSASSPASCHSEGSENSFQSSSSSVPSSPNSS. Residues 13–89 are disordered; it reads SSSSSASSPA…KPGAPGMTKS (77 aa). Ser-46 carries the phosphoserine; by GSK3-beta modification. Polar residues predominate over residues 48–61; that stretch reads NCDANGNPKNTDVS. A DNA-binding region (nuclear receptor) is located at residues 100-176; sequence VLLCKVCGDV…VGMSRDAVRF (77 aa). 2 consecutive NR C4-type zinc fingers follow at residues 103–123 and 140–164; these read CKVC…CEGC and CLKN…FKKC. An N6-acetyllysine; by KAT5 mark is found at Lys-162 and Lys-163. The interval 214–247 is disordered; sequence EPHEQSVPPAQEQLRPKPQLEQENIKSTPPPSDF. The span at 227 to 237 shows a compositional bias: basic and acidic residues; that stretch reads LRPKPQLEQEN. Intrachain disulfides connect Cys-336–Cys-342 and Cys-373–Cys-383. Positions 368–578 constitute an NR LBD domain; the sequence is RNSYLCSTGG…EELLAFKVHP (211 aa). The heme site is built by Cys-383 and His-567. The interval 396–578 is interaction with ZNHIT1; sequence SGHEIWEEFS…EELLAFKVHP (183 aa).

It belongs to the nuclear hormone receptor family. NR1 subfamily. In terms of assembly, binds DNA as a monomer or a homodimer. Interacts with NCOA5 coactivator, leading to a strong increase of transcription of target genes. Interacts (via N-terminus) with KAT5. Interacts (via C-terminus) with HDAC1. Interacts with ZNHIT1. Interacts with SIAH2. Post-translationally, deacetylated by HDAC1. Acetylation and deacetylation regulate its transcriptional regulatory activity. In terms of processing, under more reducing intracellular redox conditions, Cys-383 is in its heme-bound state, which is optimal for recruitment of the NCOR1/HDAC3 corepressor complex and repression of target genes. When subjected to oxidative stress conditions, Cys-383 undergoes oxidation to form a disulfide bridge with Cys-373, also triggering a ligand switch that results in release of bound heme and derepression of target genes. Ubiquitinated by SIAH2; leading to its proteasomal degradation. Post-translationally, phosphorylated by CSNK1E; phosphorylation enhances its cytoplasmic localization.

It is found in the nucleus. It localises to the cytoplasm. Its activity is regulated as follows. The heme-bound form can bind gaseous signaling molecules such as CO and nitric oxide (NO) and NO can reverse its transcriptional repressor activity. Functionally, transcriptional repressor which coordinates circadian rhythm and metabolic pathways in a heme-dependent manner. Integral component of the complex transcription machinery that governs circadian rhythmicity and forms a critical negative limb of the circadian clock by directly repressing the expression of core clock components BMAL1 and CLOCK. Also regulates genes involved in metabolic functions, including lipid metabolism and the inflammatory response. Acts as a receptor for heme which stimulates its interaction with the NCOR1/HDAC3 corepressor complex, enhancing transcriptional repression. Recognizes two classes of DNA response elements within the promoter of its target genes and can bind to DNA as either monomers or homodimers, depending on the nature of the response element. Binds as a monomer to a response element composed of the consensus half-site motif 5'-[A/G]GGTCA-3' preceded by an A/T-rich 5' sequence (RevRE), or as a homodimer to a direct repeat of the core motif spaced by two nuclegotides (RevDR-2). Acts as a potent competitive repressor of ROR alpha (RORA) function and also negatively regulates the expression of NR1D1. Regulates lipid and energy homeostasis in the skeletal muscle via repression of genes involved in lipid metabolism and myogenesis including: CD36, FABP3, FABP4, UCP3, SCD1 and MSTN. Regulates hepatic lipid metabolism via the repression of APOC3. Represses gene expression at a distance in macrophages by inhibiting the transcription of enhancer-derived RNAs (eRNAs). In addition to its activity as a repressor, can also act as a transcriptional activator. Acts as a transcriptional activator of the sterol regulatory element-binding protein 1 (SREBF1) and the inflammatory mediator interleukin-6 (IL6) in the skeletal muscle. Plays a role in the regulation of circadian sleep/wake cycle; essential for maintaining wakefulness during the dark phase or active period. Key regulator of skeletal muscle mitochondrial function; negatively regulates the skeletal muscle expression of core clock genes and genes involved in mitochondrial biogenesis, fatty acid beta-oxidation and lipid metabolism. May play a role in the circadian control of neutrophilic inflammation in the lung. The protein is Nuclear receptor subfamily 1 group D member 2 of Rattus norvegicus (Rat).